Consider the following 484-residue polypeptide: Aspartyl/glutamyl-tRNA(Asn/Gln) amidotransferase subunit B (484 aa).

It belongs to the GatB/GatE family. GatB subfamily. Heterotrimer of A, B and C subunits.

The catalysed reaction is L-glutamyl-tRNA(Gln) + L-glutamine + ATP + H2O = L-glutaminyl-tRNA(Gln) + L-glutamate + ADP + phosphate + H(+). The enzyme catalyses L-aspartyl-tRNA(Asn) + L-glutamine + ATP + H2O = L-asparaginyl-tRNA(Asn) + L-glutamate + ADP + phosphate + 2 H(+). In terms of biological role, allows the formation of correctly charged Asn-tRNA(Asn) or Gln-tRNA(Gln) through the transamidation of misacylated Asp-tRNA(Asn) or Glu-tRNA(Gln) in organisms which lack either or both of asparaginyl-tRNA or glutaminyl-tRNA synthetases. The reaction takes place in the presence of glutamine and ATP through an activated phospho-Asp-tRNA(Asn) or phospho-Glu-tRNA(Gln). This chain is Aspartyl/glutamyl-tRNA(Asn/Gln) amidotransferase subunit B, found in Bordetella bronchiseptica (strain ATCC BAA-588 / NCTC 13252 / RB50) (Alcaligenes bronchisepticus).